Reading from the N-terminus, the 77-residue chain is Large ribosomal subunit protein uL24 (77 aa).

The protein belongs to the universal ribosomal protein uL24 family. As to quaternary structure, part of the 50S ribosomal subunit.

In terms of biological role, one of two assembly initiator proteins, it binds directly to the 5'-end of the 23S rRNA, where it nucleates assembly of the 50S subunit. Functionally, one of the proteins that surrounds the polypeptide exit tunnel on the outside of the subunit. This is Large ribosomal subunit protein uL24 from Campylobacter jejuni subsp. jejuni serotype O:6 (strain 81116 / NCTC 11828).